A 129-amino-acid chain; its full sequence is Thylakoid-associated single-stranded DNA-binding protein slr1034 (129 aa).

Residues Met1 to Asp100 enclose the SSB domain. A disordered region spans residues Val99–Phe129.

Homotetramer.

The protein resides in the cellular thylakoid membrane. The polypeptide is Thylakoid-associated single-stranded DNA-binding protein slr1034 (Synechocystis sp. (strain ATCC 27184 / PCC 6803 / Kazusa)).